The chain runs to 112 residues: Small ribosomal subunit protein uS17 (112 aa).

This sequence belongs to the universal ribosomal protein uS17 family. In terms of assembly, part of the 30S ribosomal subunit.

Its function is as follows. One of the primary rRNA binding proteins, it binds specifically to the 5'-end of 16S ribosomal RNA. This chain is Small ribosomal subunit protein uS17, found in Thermotoga neapolitana (strain ATCC 49049 / DSM 4359 / NBRC 107923 / NS-E).